The sequence spans 603 residues: UvrABC system protein C (603 aa).

One can recognise a GIY-YIG domain in the interval 13–92 (SSPGVYLMKD…IKQHHPKYNV (80 aa)). In terms of domain architecture, UVR spans 205–240 (EEVVKDLEKVIQKASDNLEFEQAANYYRTLSLIKQA).

Belongs to the UvrC family. As to quaternary structure, interacts with UvrB in an incision complex.

The protein resides in the cytoplasm. The UvrABC repair system catalyzes the recognition and processing of DNA lesions. UvrC both incises the 5' and 3' sides of the lesion. The N-terminal half is responsible for the 3' incision and the C-terminal half is responsible for the 5' incision. This is UvrABC system protein C from Chlamydia pneumoniae (Chlamydophila pneumoniae).